The sequence spans 504 residues: Cytochrome P450 2D10 (504 aa).

Residue Ser382 is glycosylated (O-linked (GlcNAc) serine). Residue Cys446 participates in heme binding.

It belongs to the cytochrome P450 family. The cofactor is heme.

The protein resides in the endoplasmic reticulum membrane. It is found in the microsome membrane. The enzyme catalyses an organic molecule + reduced [NADPH--hemoprotein reductase] + O2 = an alcohol + oxidized [NADPH--hemoprotein reductase] + H2O + H(+). Functionally, cytochromes P450 are a group of heme-thiolate monooxygenases. In liver microsomes, this enzyme is involved in an NADPH-dependent electron transport pathway. It oxidizes a variety of structurally unrelated compounds, including steroids, fatty acids, and xenobiotics. The protein is Cytochrome P450 2D10 (Cyp2d10) of Rattus norvegicus (Rat).